Consider the following 83-residue polypeptide: Small proline-rich protein 2A3 (83 aa).

Tandem repeats lie at residues 21–29 (PKCPEPCPP), 30–38 (QVWPGPCRP), 39–47 (VMCFEPCLP), 48–56 (SVWPGPCRP), and 57–65 (VVCYEQCPP). Residues 21–65 (PKCPEPCPPQVWPGPCRPVMCFEPCLPSVWPGPCRPVVCYEQCPP) form a 5 X 9 AA approximate tandem repeats region.

This sequence belongs to the cornifin (SPRR) family. In terms of processing, forms five pairs of intrachain disulfide bonds.

Its subcellular location is the secreted. The protein resides in the extracellular space. It is found in the cytoplasmic vesicle. The protein localises to the secretory vesicle. Functionally, gut bactericidal protein that selectively kills Gram-positive bacteria by binding to negatively charged lipids on bacterial membranes, leading to bacterial membrane permeabilization and disruption. Specifically binds lipids bearing negatively charged headgroups, such as phosphatidic acid, phosphatidylserine (PS), cardiolipin (CL), and phosphatidylinositol phosphates, but not to zwitterionic or neutral lipids. Induced by type-2 cytokines in response to helminth infection and is required to protect against helminth-induced bacterial invasion of intestinal tissue. May also be involved in the development of the cornified envelope of squamous epithelia; however, additional evidences are required to confirm this result in vivo. The chain is Small proline-rich protein 2A3 from Mus musculus (Mouse).